Reading from the N-terminus, the 212-residue chain is Pyridoxine/pyridoxamine 5'-phosphate oxidase (212 aa).

Substrate contacts are provided by residues Arg-8–Tyr-11 and Lys-66. FMN is bound by residues Arg-61–Lys-66, Phe-76–Thr-77, Arg-82, Lys-83, and Gln-105. The substrate site is built by Tyr-123, Arg-127, and Ser-131. FMN-binding positions include Gln-140–Ser-141 and Trp-184. Arg-190 to His-192 contacts substrate. Residue Arg-194 coordinates FMN.

Belongs to the pyridoxamine 5'-phosphate oxidase family. In terms of assembly, homodimer. It depends on FMN as a cofactor.

It catalyses the reaction pyridoxamine 5'-phosphate + O2 + H2O = pyridoxal 5'-phosphate + H2O2 + NH4(+). It carries out the reaction pyridoxine 5'-phosphate + O2 = pyridoxal 5'-phosphate + H2O2. It functions in the pathway cofactor metabolism; pyridoxal 5'-phosphate salvage; pyridoxal 5'-phosphate from pyridoxamine 5'-phosphate: step 1/1. Its pathway is cofactor metabolism; pyridoxal 5'-phosphate salvage; pyridoxal 5'-phosphate from pyridoxine 5'-phosphate: step 1/1. Its function is as follows. Catalyzes the oxidation of either pyridoxine 5'-phosphate (PNP) or pyridoxamine 5'-phosphate (PMP) into pyridoxal 5'-phosphate (PLP). In Cupriavidus metallidurans (strain ATCC 43123 / DSM 2839 / NBRC 102507 / CH34) (Ralstonia metallidurans), this protein is Pyridoxine/pyridoxamine 5'-phosphate oxidase.